We begin with the raw amino-acid sequence, 621 residues long: Solute carrier family 2, facilitated glucose transporter member 12 (621 aa).

Over 1–48 (MVPVENTEGPNLLNQKGTAVETEGSYRASGSRHPPWARGCGMFTFLSS) the chain is Cytoplasmic. A helical membrane pass occupies residues 49 to 69 (VTAAVSGLLVGYELGIISGAL). Over 70-84 (LQIKTLLTLSCHEQE) the chain is Extracellular. The helical transmembrane segment at 85 to 105 (MVVSSLLIGALLASLTGGVLI) threads the bilayer. At 106–119 (DRYGRRTAIILSSC) the chain is on the cytoplasmic side. Residues 120–140 (LLGLGSLVLILSLSYTVLIVG) form a helical membrane-spanning segment. A topological domain (extracellular) is located at residue arginine 141. The helical transmembrane segment at 142 to 162 (IAIGVSISLSSIATCVYIAEI) threads the bilayer. Residues 163 to 176 (APQHRRGLLVSLNE) are Cytoplasmic-facing. The chain crosses the membrane as a helical span at residues 177 to 197 (LMIVIGILSAYISNYAFANVF). The Extracellular portion of the chain corresponds to 198-201 (HGWK). The helical transmembrane segment at 202 to 222 (YMFGLVIPLGILQAIAMYFLP) threads the bilayer. The Cytoplasmic segment spans residues 223 to 282 (PSPRFLVMKGQEGAASKVLGRLRALSDATEELTVIKSSLKDEYQYSFWDLFRSKDNMRTR). The chain crosses the membrane as a helical span at residues 283–303 (IMIGLTLVFFVQITGQPNILF). At 304–321 (YASTVLKSVGFQSNEAAS) the chain is on the extracellular side. A helical transmembrane segment spans residues 322–342 (LASTGVGVVKVISTIPATLLV). The Cytoplasmic segment spans residues 343-349 (DHVGSKT). Residues 350-370 (FLCIGSSVMAASLVTMGIVNL) form a helical membrane-spanning segment. The Extracellular segment spans residues 371–470 (NIHMNFTNIC…PAFLKWLSLA (100 aa)). N-linked (GlcNAc...) asparagine glycans are attached at residues asparagine 375, asparagine 387, asparagine 400, and asparagine 405. A helical transmembrane segment spans residues 471 to 491 (SLLVYVAAFSIGLGPMPWLVL). The Cytoplasmic portion of the chain corresponds to 492-502 (SEIFPGGIRGR). The chain crosses the membrane as a helical span at residues 503 to 523 (AMALTSSMNWGINLLISLTFL). Topologically, residues 524–532 (TVTDLIGLP) are extracellular. The helical transmembrane segment at 533 to 553 (WVCFIYTIMSLASLLFVVMFI) threads the bilayer. The Cytoplasmic portion of the chain corresponds to 554 to 621 (PETKGCSLEQ…GQSRQLSPEN (68 aa)).

Belongs to the major facilitator superfamily. Sugar transporter (TC 2.A.1.1) family. Glucose transporter subfamily.

The protein localises to the cell membrane. It is found in the endomembrane system. It localises to the cytoplasm. The protein resides in the perinuclear region. It carries out the reaction D-glucose(out) = D-glucose(in). Its function is as follows. Insulin-independent facilitative glucose transporter. This is Solute carrier family 2, facilitated glucose transporter member 12 from Macaca fascicularis (Crab-eating macaque).